Consider the following 102-residue polypeptide: Citrate lyase acyl carrier protein (102 aa).

O-(phosphoribosyl dephospho-coenzyme A)serine is present on Ser-14.

It belongs to the CitD family. In terms of assembly, oligomer with a subunit composition of (alpha,beta,gamma)6.

The protein localises to the cytoplasm. Covalent carrier of the coenzyme of citrate lyase. The chain is Citrate lyase acyl carrier protein from Streptococcus equi subsp. zooepidemicus (strain MGCS10565).